The primary structure comprises 597 residues: Aspartate--tRNA(Asp/Asn) ligase (597 aa).

Glutamate 182 lines the L-aspartate pocket. Positions 206 to 209 (QLFK) are aspartate. An L-aspartate-binding site is contributed by arginine 228. ATP is bound by residues 228–230 (RDE) and glutamine 237. Histidine 455 contributes to the L-aspartate binding site. Glutamate 489 serves as a coordination point for ATP. Arginine 496 provides a ligand contact to L-aspartate. 541–544 (GFDR) contributes to the ATP binding site.

Belongs to the class-II aminoacyl-tRNA synthetase family. Type 1 subfamily. In terms of assembly, homodimer.

Its subcellular location is the cytoplasm. The enzyme catalyses tRNA(Asx) + L-aspartate + ATP = L-aspartyl-tRNA(Asx) + AMP + diphosphate. Functionally, aspartyl-tRNA synthetase with relaxed tRNA specificity since it is able to aspartylate not only its cognate tRNA(Asp) but also tRNA(Asn). Reaction proceeds in two steps: L-aspartate is first activated by ATP to form Asp-AMP and then transferred to the acceptor end of tRNA(Asp/Asn). The sequence is that of Aspartate--tRNA(Asp/Asn) ligase from Desulfosudis oleivorans (strain DSM 6200 / JCM 39069 / Hxd3) (Desulfococcus oleovorans).